The following is a 111-amino-acid chain: RNA polymerase-binding protein RbpA (111 aa).

It belongs to the RNA polymerase-binding protein RbpA family. Forms a complex with the RNAP catalytic core and with free principal sigma factors.

Functionally, binds to RNA polymerase (RNAP), stimulating transcription from principal, but not alternative sigma factor promoters. The sequence is that of RNA polymerase-binding protein RbpA from Mycobacterium tuberculosis (strain CDC 1551 / Oshkosh).